Here is a 217-residue protein sequence, read N- to C-terminus: Adapter protein MecA (217 aa).

It belongs to the MecA family. Homodimer.

In terms of biological role, enables the recognition and targeting of unfolded and aggregated proteins to the ClpC protease or to other proteins involved in proteolysis. This chain is Adapter protein MecA, found in Listeria monocytogenes serotype 4b (strain CLIP80459).